The chain runs to 143 residues: Ribosome maturation factor RimP (143 aa).

It belongs to the RimP family.

It is found in the cytoplasm. Functionally, required for maturation of 30S ribosomal subunits. The protein is Ribosome maturation factor RimP of Borrelia hermsii (strain HS1 / DAH).